The following is a 435-amino-acid chain: MRLRSFAFLGFMLLVAMAPSMASAQPQPLDRIVAVVNKDAIMQSRLEDRVTQVRRQMASRNVPAPNEADLRRQVLDRMILEQIQLQMAERANLSIDDTQLNATVRGIAEDNGMSMDEFADALEEDGMSLASMREQVRREMLLRQVQQSQVASRVNVTDREVERYLDQQGETADTAYHLAHILVSVPESPTPEQVEQAQAKVRDLYRQLQNGANFAQLATAESDGQQALSGGDLGWRRGDQLPSLFADVVPTLSNGEVSEPIRSPSGFHLVKLIDTRGQQGEQKRVVTENRVRHILIGTNPNRNDQQAEALARDIRQRIANGESFAALAQEYSDDDGSALDGGELGWTRPGQMVPAFEDAVKALDVGELSQPVRSRFGYHVIELEDRRRQDVTRDAQREQIRQTLFQRKVSDEMEAWTQEIRSGAYIDNRLEDGRQ.

The first 24 residues, 1–24 (MRLRSFAFLGFMLLVAMAPSMASA), serve as a signal peptide directing secretion. 2 consecutive PpiC domains span residues 173–274 (DTAY…KLID) and 286–385 (VTEN…ELED).

The protein localises to the periplasm. It catalyses the reaction [protein]-peptidylproline (omega=180) = [protein]-peptidylproline (omega=0). Its function is as follows. Chaperone involved in the correct folding and assembly of outer membrane proteins. Recognizes specific patterns of aromatic residues and the orientation of their side chains, which are found more frequently in integral outer membrane proteins. May act in both early periplasmic and late outer membrane-associated steps of protein maturation. The polypeptide is Chaperone SurA (Chromohalobacter salexigens (strain ATCC BAA-138 / DSM 3043 / CIP 106854 / NCIMB 13768 / 1H11)).